We begin with the raw amino-acid sequence, 647 residues long: Transcriptional repressor XBP1 (647 aa).

2 stretches are compositionally biased toward polar residues: residues 138–148 (SNKTPVSASPT) and 156–170 (STAS…LTKN). Disordered regions lie at residues 138 to 170 (SNKT…LTKN) and 264 to 295 (LLSS…STSS). Residues 264–282 (LLSSSTSSPPKRRTSTGST) are compositionally biased toward low complexity. The HTH APSES-type domain maps to 282 to 395 (TFLDANASSS…PDFPKDCESW (114 aa)). The H-T-H motif DNA-binding region spans 318–339 (CQSYKDFLINELGPDQIDLPNL). The segment covering 425–434 (TNFTSTAVAR) has biased composition (low complexity). Disordered regions lie at residues 425–455 (TNFT…HSKA), 485–508 (KKNS…GPRD), and 612–647 (QNQR…NSKQ). Basic residues predominate over residues 435 to 445 (PRQKPRPRPRQ). Low complexity predominate over residues 493–502 (SSTYTSQTSS).

It is found in the nucleus. Its function is as follows. Transcriptional repressor which binds to the consensus sequence 5'-GCCTCGA[G/A]G[C/A]-3'. Represses CLN1 transcription. In Saccharomyces cerevisiae (strain ATCC 204508 / S288c) (Baker's yeast), this protein is Transcriptional repressor XBP1 (XBP1).